The following is a 170-amino-acid chain: UPF0260 protein RPC_1790 (170 aa).

Belongs to the UPF0260 family.

This chain is UPF0260 protein RPC_1790, found in Rhodopseudomonas palustris (strain BisB18).